The primary structure comprises 158 residues: GTP-dependent dephospho-CoA kinase (158 aa).

Positions 35, 36, 37, 54, 56, 109, and 132 each coordinate GTP.

Belongs to the GTP-dependent DPCK family.

The catalysed reaction is 3'-dephospho-CoA + GTP = GDP + CoA + H(+). It participates in cofactor biosynthesis; coenzyme A biosynthesis. Catalyzes the GTP-dependent phosphorylation of the 3'-hydroxyl group of dephosphocoenzyme A to form coenzyme A (CoA). The polypeptide is GTP-dependent dephospho-CoA kinase (Methanocaldococcus jannaschii (strain ATCC 43067 / DSM 2661 / JAL-1 / JCM 10045 / NBRC 100440) (Methanococcus jannaschii)).